The primary structure comprises 619 residues: Chaperone protein HscA homolog (619 aa).

It belongs to the heat shock protein 70 family.

Its function is as follows. Chaperone involved in the maturation of iron-sulfur cluster-containing proteins. Has a low intrinsic ATPase activity which is markedly stimulated by HscB. This is Chaperone protein HscA homolog from Haemophilus influenzae (strain PittEE).